The primary structure comprises 196 residues: Holliday junction branch migration complex subunit RuvA (196 aa).

The tract at residues 1–63 (MYDYIKGTLV…DDAHLLFGFH (63 aa)) is domain I. The domain II stretch occupies residues 64 to 142 (TEDEKEVFLK…ELPAETTNTT (79 aa)). The segment at 143–146 (ANQT) is flexible linker. A domain III region spans residues 147–196 (AGNQQLDEAMEALLALGYKSTELKKVKAFFEDTNETAEQYIKSALKMLMK).

This sequence belongs to the RuvA family. In terms of assembly, homotetramer. Forms an RuvA(8)-RuvB(12)-Holliday junction (HJ) complex. HJ DNA is sandwiched between 2 RuvA tetramers; dsDNA enters through RuvA and exits via RuvB. An RuvB hexamer assembles on each DNA strand where it exits the tetramer. Each RuvB hexamer is contacted by two RuvA subunits (via domain III) on 2 adjacent RuvB subunits; this complex drives branch migration. In the full resolvosome a probable DNA-RuvA(4)-RuvB(12)-RuvC(2) complex forms which resolves the HJ.

The protein resides in the cytoplasm. In terms of biological role, the RuvA-RuvB-RuvC complex processes Holliday junction (HJ) DNA during genetic recombination and DNA repair, while the RuvA-RuvB complex plays an important role in the rescue of blocked DNA replication forks via replication fork reversal (RFR). RuvA specifically binds to HJ cruciform DNA, conferring on it an open structure. The RuvB hexamer acts as an ATP-dependent pump, pulling dsDNA into and through the RuvAB complex. HJ branch migration allows RuvC to scan DNA until it finds its consensus sequence, where it cleaves and resolves the cruciform DNA. This Streptococcus thermophilus (strain CNRZ 1066) protein is Holliday junction branch migration complex subunit RuvA.